The chain runs to 1075 residues: Protein nervous wreck (1075 aa).

Positions 11–289 constitute an F-BAR domain; that stretch reads VKFLKNLHTE…QAQQLTREYN (279 aa). 2 disordered regions span residues 361-381 and 431-536; these read LRDS…LDTK and SASS…DEPI. Residues 431-453 show a composition bias toward polar residues; sequence SASSISMRTDASGQGENPSSDSF. Residues 469 to 482 are compositionally biased toward basic and acidic residues; it reads PKQEQQLSRDRTFS. Residues 493–512 show a composition bias toward low complexity; sequence SAAAASSAAAASSSMMASSA. SH3 domains follow at residues 542–603 and 658–721; these read EAIF…IDQE and SDVE…ECDE. Disordered stretches follow at residues 722 to 747, 769 to 837, and 864 to 917; these read MGEP…LPPA, SQDT…EKGA, and GADK…EGNA. Pro residues-rich tracts occupy residues 733-747 and 809-818; these read SPPP…LPPA and QPPPSLPPPQ. A compositionally biased stretch (low complexity) spans 819 to 837; that stretch reads LAKAGGSAPGSGSKVEKGA. Residues 883 to 897 show a composition bias toward basic and acidic residues; the sequence is VSKEQPAEVAKKPDI.

In terms of assembly, homodimer. Interacts (via SH3 domain 1) with WASp. Interacts (via SH3 domain 1) with shi/dynamin. Interacts (via SH3 domain 2) with Dap160. Interacts (via F-BAR domain) with SH3PX1. Interacts (via SH3 domain 2) with Snx16. Identified in a complex with Syn and Syt1. As to expression, detected in larval body wall muscle. Detected at the neuromuscular junction, on motoneuron axons and axon terminals, at synaptic boutons in the periactive zone surrounding the synapse (at protein level). Detected on motoneuron axons and axon terminals, at synaptic boutons in the periactive zone surrounding the synapse.

It is found in the endomembrane system. Its subcellular location is the synapse. It localises to the cell projection. The protein localises to the axon. The protein resides in the presynaptic cell membrane. It is found in the cytoplasmic vesicle. Its subcellular location is the secretory vesicle. It localises to the synaptic vesicle. The protein localises to the recycling endosome. In terms of biological role, adapter protein that provides a link between vesicular membrane traffic and the actin assembly machinery. Acts together with Cdc42 to stimulate actin nucleation mediated by WASp and the ARP2/3 complex. Binds to membranes enriched in phosphatidylinositol 4,5-bisphosphate and causes local membrane deformation. Required for normal structure and function of synapses at the neuromuscular junction. Plays a role in synaptic vesicle trafficking. Required for the release of a normal number of synaptic vesicles per action potential. The sequence is that of Protein nervous wreck from Drosophila melanogaster (Fruit fly).